A 250-amino-acid polypeptide reads, in one-letter code: Ureidoacrylate amidohydrolase RutB (250 aa).

Catalysis depends on Asp44, which acts as the Proton acceptor. Lys153 is an active-site residue. Residue Cys186 is the Nucleophile of the active site.

The protein belongs to the isochorismatase family. RutB subfamily.

The catalysed reaction is (Z)-3-ureidoacrylate + H2O + H(+) = (Z)-3-aminoacrylate + NH4(+) + CO2. It carries out the reaction (Z)-3-ureidoacrylate + H2O = (Z)-3-aminoacrylate + carbamate + H(+). The enzyme catalyses (Z)-2-methylureidoacrylate + H2O + H(+) = (Z)-2-methylaminoacrylate + NH4(+) + CO2. In terms of biological role, hydrolyzes ureidoacrylate to form aminoacrylate and carbamate. The carbamate hydrolyzes spontaneously, thereby releasing one of the nitrogen atoms of the pyrimidine ring as ammonia and one of its carbon atoms as CO2. The sequence is that of Ureidoacrylate amidohydrolase RutB from Pantoea ananatis (strain LMG 20103).